We begin with the raw amino-acid sequence, 809 residues long: H(+)/Cl(-) exchange transporter 7 (809 aa).

The Cytoplasmic portion of the chain corresponds to 1–130 (MANVSKKVSW…TAFRTVEIKR (130 aa)). Ser9 and Ser64 each carry phosphoserine. Transmembrane regions (helical) follow at residues 131–163 (WVICAMVGILTGLVACFIDIVVEKLAGLKYRLV) and 178–201 (FSLLLWAALNAAFVLLGSTIVAFI). The Selectivity filter part_1 signature appears at 207–211 (GSGIP). Ser208 serves as a coordination point for chloride. Residues 210-217 (IPQIKCFL) constitute an intramembrane region (helical). Transmembrane regions (helical) follow at residues 227-245 (RLKTLVIKVSGVILSVVGG) and 251-268 (EGPMIHSGSVIAAGISQG). Positions 249–253 (GKEGP) match the Selectivity filter part_2 motif. 2 consecutive intramembrane regions (helical) follow at residues 292-304 (FVSAGAAAGVSAA) and 308-316 (PVGGVLFSL). 5 helical membrane-spanning segments follow: residues 326 to 345 (FLTWRIFFASMISTFTLNFV), 379 to 409 (IPIFIAMGVVGGILGAVFNALNYWLTMFRIR), 414 to 436 (PCLQVVEATLVAAVTATAAFVLI), 491 to 511 (PMTLGLFTLVYFFLACWTYGL), and 516 to 539 (GVFIPSLLIGAAWGRLFGISLSYI). The short motif at 516–520 (GVFIP) is the Selectivity filter part_3 element. Phe518 serves as a coordination point for chloride. The helical intramembrane region spans 549 to 563 (GKYALMGAAAQLGGI). Positions 564–566 (VRM) form an intramembrane region, note=Loop between two helices. The helical intramembrane region spans 567-578 (TLSLTVIMMEAT). An intramembrane region (note=Loop between two helices) is located at residues 579 to 582 (SSVT). A helical membrane pass occupies residues 583-601 (YGFPIMLVLMTAKIVGDVF). Residues 602–809 (IEGLYDMHIQ…GLEELSLAQT (208 aa)) are Cytoplasmic-facing. Position 606 (Tyr606) interacts with chloride. 2 consecutive CBS domains span residues 635–699 (MSTP…VFVE) and 745–803 (MNPS…GLEE). ATP contacts are provided by residues 662 to 664 (HNG) and 787 to 790 (TRKD). Ser805 is modified (phosphoserine).

It belongs to the chloride channel (TC 2.A.49) family. ClC-7/CLCN7 subfamily. Chloride channel 7 are heteromers of alpha (CLCN7) and beta (OSTM1) subunits.

It is found in the lysosome membrane. The enzyme catalyses 2 chloride(in) + H(+)(out) = 2 chloride(out) + H(+)(in). Functionally, slowly voltage-gated channel mediating the exchange of chloride ions against protons. Functions as antiporter and contributes to the acidification of the lysosome lumen and may be involved in maintaining lysosomal pH. The CLC channel family contains both chloride channels and proton-coupled anion transporters that exchange chloride or another anion for protons. The presence of conserved gating glutamate residues is typical for family members that function as antiporters. This Bos taurus (Bovine) protein is H(+)/Cl(-) exchange transporter 7 (CLCN7).